The sequence spans 206 residues: Small ribosomal subunit protein uS4 (206 aa).

Positions 98-158 (RRLDNVVFRL…EKSRSMELIK (61 aa)) constitute an S4 RNA-binding domain.

It belongs to the universal ribosomal protein uS4 family. Part of the 30S ribosomal subunit. Contacts protein S5. The interaction surface between S4 and S5 is involved in control of translational fidelity.

In terms of biological role, one of the primary rRNA binding proteins, it binds directly to 16S rRNA where it nucleates assembly of the body of the 30S subunit. Functionally, with S5 and S12 plays an important role in translational accuracy. This Thermoanaerobacter pseudethanolicus (strain ATCC 33223 / 39E) (Clostridium thermohydrosulfuricum) protein is Small ribosomal subunit protein uS4.